The chain runs to 377 residues: Methionine import ATP-binding protein MetN 2 (377 aa).

One can recognise an ABC transporter domain in the interval 25-262 (IRIEHLSKTF…PKSAVARSFL (238 aa)). ATP is bound at residue 59 to 66 (GRSGAGKS).

Belongs to the ABC transporter superfamily. Methionine importer (TC 3.A.1.24) family. The complex is composed of two ATP-binding proteins (MetN), two transmembrane proteins (MetI) and a solute-binding protein (MetQ).

The protein resides in the cell inner membrane. The enzyme catalyses L-methionine(out) + ATP + H2O = L-methionine(in) + ADP + phosphate + H(+). The catalysed reaction is D-methionine(out) + ATP + H2O = D-methionine(in) + ADP + phosphate + H(+). In terms of biological role, part of the ABC transporter complex MetNIQ involved in methionine import. Responsible for energy coupling to the transport system. In Rhodopseudomonas palustris (strain ATCC BAA-98 / CGA009), this protein is Methionine import ATP-binding protein MetN 2.